Reading from the N-terminus, the 831-residue chain is Cysteine--tRNA ligase, cytoplasmic (831 aa).

Position 2 is an N-acetylalanine (A2). Residue S102 is modified to Phosphoserine. Residue C138 participates in Zn(2+) binding. L-cysteine is bound at residue G139. Positions 140 to 150 (PTVYDASHMGH) match the 'HIGH' region motif. T179 is an L-cysteine binding site. A 'KIIK' region motif is present at residues 184–187 (KIIR). Phosphoserine occurs at positions 388 and 390. Zn(2+) is bound by residues C431, H456, and E460. Position 456 (H456) interacts with L-cysteine. A 'KMSKS' region motif is present at residues 489–493 (KMSKS). K492 provides a ligand contact to ATP. Positions 736-762 (GKKRAEEEKRRKKEEAARKKQEQEAAK) are enriched in basic and acidic residues. A disordered region spans residues 736 to 766 (GKKRAEEEKRRKKEEAARKKQEQEAAKLAKM). S829 carries the post-translational modification Phosphoserine.

Belongs to the class-I aminoacyl-tRNA synthetase family. Homodimer. It depends on Zn(2+) as a cofactor.

The protein resides in the cytoplasm. The enzyme catalyses tRNA(Cys) + L-cysteine + ATP = L-cysteinyl-tRNA(Cys) + AMP + diphosphate. In terms of biological role, catalyzes the ATP-dependent ligation of cysteine to tRNA(Cys). The polypeptide is Cysteine--tRNA ligase, cytoplasmic (Cars1) (Mus musculus (Mouse)).